We begin with the raw amino-acid sequence, 152 residues long: Superoxide dismutase [Cu-Zn] 5 (152 aa).

Cu cation is bound by residues histidine 44, histidine 46, and histidine 61. The cysteines at positions 55 and 144 are disulfide-linked. Histidine 61, histidine 69, histidine 78, and aspartate 81 together coordinate Zn(2+). Histidine 118 serves as a coordination point for Cu cation.

This sequence belongs to the Cu-Zn superoxide dismutase family. It depends on Cu cation as a cofactor. Requires Zn(2+) as cofactor.

It carries out the reaction 2 superoxide + 2 H(+) = H2O2 + O2. Its function is as follows. Destroys radicals which are normally produced within the cells and which are toxic to biological systems. This is Superoxide dismutase [Cu-Zn] 5 (sodE) from Dictyostelium discoideum (Social amoeba).